Here is a 725-residue protein sequence, read N- to C-terminus: FYVE, RhoGEF and PH domain-containing protein 3 (725 aa).

The disordered stretch occupies residues Met1–Gln151. Residues Glu124–Ser136 are compositionally biased toward acidic residues. Residue Ser128 is modified to Phosphoserine. Residues Lys157–Ala341 form the DH domain. The PH 1 domain occupies Glu370–Glu469. Positions Gln487–Asp532 are disordered. Residues Thr500–Glu512 show a composition bias toward low complexity. Residues Glu521–Asp532 show a composition bias toward basic and acidic residues. The segment at Asp532–Pro588 adopts an FYVE-type zinc-finger fold. The Zn(2+) site is built by Cys538, Cys541, Cys555, Cys558, Cys563, Cys566, Cys580, and Cys583. Positions Pro604–His703 constitute a PH 2 domain. The disordered stretch occupies residues His703–Pro725.

Its subcellular location is the cytoplasm. It is found in the cytoskeleton. In terms of biological role, promotes the formation of filopodia. May activate CDC42, a member of the Ras-like family of Rho- and Rac proteins, by exchanging bound GDP for free GTP. Plays a role in regulating the actin cytoskeleton and cell shape. The polypeptide is FYVE, RhoGEF and PH domain-containing protein 3 (FGD3) (Homo sapiens (Human)).